Here is a 362-residue protein sequence, read N- to C-terminus: Probable protein phosphatase 2C 11 (362 aa).

The 307-residue stretch at 23 to 329 folds into the PPM-type phosphatase domain; it reads KLGLSSMQGW…DNMTMVLVQF (307 aa). Positions 57, 58, 272, and 320 each coordinate Mn(2+).

Belongs to the PP2C family. Mg(2+) is required as a cofactor. Mn(2+) serves as cofactor.

The catalysed reaction is O-phospho-L-seryl-[protein] + H2O = L-seryl-[protein] + phosphate. The enzyme catalyses O-phospho-L-threonyl-[protein] + H2O = L-threonyl-[protein] + phosphate. In Oryza sativa subsp. japonica (Rice), this protein is Probable protein phosphatase 2C 11.